A 194-amino-acid polypeptide reads, in one-letter code: Homing endonuclease I-DmoI (194 aa).

The 134-residue stretch at 14–147 folds into the DOD-type homing endonuclease domain; the sequence is LLGLIIGDGG…VSRWLNNLGV (134 aa). Residues D21 and E117 contribute to the active site.

A divalent metal cation serves as cofactor.

Functionally, endonuclease involved in intron homing. Recognizes DNA in the 23S rRNA gene intron (minimally 5'-CCGGGTAAGTTCCGG-3'), cutting after A-8 on the top and C-11 on the bottom strand. Has a slow turnover rate, cuts the coding strand with a slight preference over the non-coding strand. This chain is Homing endonuclease I-DmoI, found in Desulfurococcus mucosus (Desulfurococcus mobilis).